An 844-amino-acid polypeptide reads, in one-letter code: Janus kinase and microtubule-interacting protein 3 (844 aa).

Residues 8–259 adopt a coiled-coil conformation; sequence SRAKGDKAET…LSQAKEAERH (252 aa). The tract at residues 249–290 is disordered; sequence QLSQAKEAERHPGSPRRELPYASGAGDASDHSGSPEQQLDEK. A compositionally biased stretch (basic and acidic residues) spans 254–267; it reads KEAERHPGSPRREL. Residues 270–282 show a composition bias toward low complexity; it reads ASGAGDASDHSGS. Positions 289 to 421 form a coiled coil; that stretch reads EKDARRFQLK…DELSKTLETA (133 aa). Position 384 is a phosphoserine (Ser384). The span at 466-483 shows a compositional bias: polar residues; that stretch reads SDGSSISYQTDRTDQTPC. Residues 466–488 form a disordered region; it reads SDGSSISYQTDRTDQTPCTPEDD. Coiled coils occupy residues 493-621 and 688-833; these read MAKE…RERK and EKWL…LFLF.

The protein belongs to the JAKMIP family.

The protein localises to the golgi apparatus. The chain is Janus kinase and microtubule-interacting protein 3 (Jakmip3) from Mus musculus (Mouse).